The primary structure comprises 251 residues: Regulator of G-protein signaling 7-binding protein B (251 aa).

The disordered stretch occupies residues methionine 1–arginine 43. Residues serine 25–arginine 43 are compositionally biased toward basic and acidic residues. S-palmitoyl cysteine attachment occurs at residues cysteine 246 and cysteine 247.

Belongs to the RGS7BP/RGS9BP family. Palmitoylated. Undergoes rapid palmitoylation turnover. Palmitoylation regulates the cell membrane and nuclear shuttling and the regulation of GPCR signaling. Upon depalmitoylation, it is targeted from the plasma membrane into the nucleus. GPCR signaling inhibits depalmitoylation and promotes localization to the plasma membrane.

The protein resides in the nucleus. Its subcellular location is the cytoplasm. The protein localises to the cell membrane. Its function is as follows. Regulator of G protein-coupled receptor (GPCR) signaling. Regulatory subunit of the R7-Gbeta5 complexes that acts by controlling the subcellular location of the R7-Gbeta5 complexes. When palmitoylated, it targets the R7-Gbeta5 complexes to the plasma membrane, leading to inhibit G protein alpha subunits. When it is unpalmitoylated, the R7-Gbeta5 complexes undergo a nuclear/cytoplasmic shuttling. This chain is Regulator of G-protein signaling 7-binding protein B (rgs7bpb), found in Danio rerio (Zebrafish).